We begin with the raw amino-acid sequence, 66 residues long: U1-theraphotoxin-Cg1d 1 (66 aa).

The N-terminal stretch at 1–21 (MKMSALFVIFGLALLFCNSFA) is a signal peptide. A propeptide spanning residues 22 to 29 (AELKATGR) is cleaved from the precursor. Intrachain disulfides connect C31–C46, C38–C51, and C45–C58. Residue P63 is modified to Proline amide.

Belongs to the neurotoxin 10 (Hwtx-1) family. 46 (Jztx-7/10/12) subfamily. Expressed by the venom gland.

It localises to the secreted. Probable ion channel inhibitor. The sequence is that of U1-theraphotoxin-Cg1d 1 from Chilobrachys guangxiensis (Chinese earth tiger tarantula).